Consider the following 365-residue polypeptide: 3-galactosyl-N-acetylglucosaminide 4-alpha-L-fucosyltransferase FUT3 (365 aa).

Residues 1-15 lie on the Cytoplasmic side of the membrane; the sequence is MYPPGCAKVKCSWHH. Residues 16–34 form a helical; Signal-anchor for type II membrane protein membrane-spanning segment; sequence CLPGLLLQLLLALCFFSYL. Over 35–365 the chain is Lumenal; sequence RMSQEKPKPK…TVPSIASWFQ (331 aa). Asparagine 100, asparagine 158, and asparagine 189 each carry an N-linked (GlcNAc...) asparagine glycan.

Belongs to the glycosyltransferase 10 family. Glycosylated. Liver, kidney, lung and brain.

The protein localises to the golgi apparatus. The protein resides in the golgi stack membrane. The enzyme catalyses a beta-D-galactosyl-(1-&gt;3)-N-acetyl-beta-D-glucosaminyl derivative + GDP-beta-L-fucose = a beta-D-galactosyl-(1-&gt;3)-[alpha-L-fucosyl-(1-&gt;4)]-N-acetyl-beta-D-glucosaminyl derivative + GDP + H(+). It catalyses the reaction an N-acetyl-alpha-neuraminyl-(2-&gt;3)-beta-D-galactosyl-(1-&gt;4)-N-acetyl-beta-D-glucosaminyl derivative + GDP-beta-L-fucose = an alpha-Neu5Ac-(2-&gt;3)-beta-D-Gal-(1-&gt;4)-[alpha-L-Fuc-(1-&gt;3)]-beta-D-GlcNAc derivative + GDP + H(+). It carries out the reaction a beta-D-galactosyl-(1-&gt;4)-N-acetyl-beta-D-glucosaminyl derivative + GDP-beta-L-fucose = a beta-D-galactosyl-(1-&gt;4)-[alpha-L-fucosyl-(1-&gt;3)]-N-acetyl-beta-D-glucosaminyl derivative + GDP + H(+). The catalysed reaction is an alpha-Neu5Ac-(2-&gt;3)-beta-D-Gal-(1-&gt;4)-beta-D-GlcNAc-(1-&gt;3)-beta-D-Gal-(1-&gt;4)-[alpha-L-Fuc-(1-&gt;3)]-beta-D-GlcNAc derivative + GDP-beta-L-fucose = an alpha-Neu5Ac-(2-&gt;3)-beta-D-Gal-(1-&gt;4)-[alpha-L-Fuc-(1-&gt;3)]-beta-D-GlcNAc-(1-&gt;3)-beta-D-Gal-(1-&gt;4)-[alpha-L-Fuc-(1-&gt;3)]-beta-D-GlcNAc derivative + GDP + H(+). The enzyme catalyses Lc4Cer + GDP-beta-L-fucose = a lactoside III(4)-a-Fuc-Lc4Cer + GDP + H(+). It catalyses the reaction a beta-D-Gal-(1-&gt;3)-beta-D-GlcNAc-(1-&gt;3)-beta-D-Gal-(1-&gt;4)-beta-D-Glc-(1&lt;-&gt;1')-Cer(d18:1(4E)) + GDP-beta-L-fucose = a III(4)-a-Fuc-Lc4Cer(d18:1(4E)) + GDP + H(+). It carries out the reaction N-acetyl-alpha-neuraminosyl-(2-&gt;3)-beta-D-galactosyl-(1-&gt;3)-[N-acetyl-alpha-neuraminosyl-(2-&gt;6)]-N-acetyl-beta-D-glucosaminyl-(1-&gt;3)-beta-D-galactosyl-(1-&gt;4)-beta-D-glucosyl-(1&lt;-&gt;1')-N-acyl-sphing-4-enine + GDP-beta-L-fucose = N-acetyl-alpha-neuraminosyl-(2-&gt;3)-beta-D-galactosyl-(1-&gt;3)-alpha-L-fucosyl-(1-&gt;4)-[N-acetyl-alpha-neuraminosyl-(2-&gt;6)-N-acetyl-beta-D-glucosaminyl-(1-&gt;3)]-beta-D-galactosyl-(1-&gt;4)-beta-D-glucosyl-(1&lt;-&gt;1')-N-acyl-sphing-4-enine + GDP + H(+). The catalysed reaction is N-acetyl-alpha-neuraminosyl-(2-&gt;3)-beta-D-galactosyl-(1-&gt;3)-N-acetyl-beta-D-glucosaminyl-(1-&gt;3)-beta-D-galactosyl-(1-&gt;4)-beta-D-glucosyl-(1&lt;-&gt;1')-N-acyl-sphing-4-enine + GDP-beta-L-fucose = N-acetyl-alpha-neuraminosyl-(2-&gt;3)-beta-D-galactosyl-(1-&gt;3)-alpha-L-fucosyl-(1-&gt;4)-[N-acetyl-beta-D-glucosaminyl-(1-&gt;3)]-beta-D-galactosyl-(1-&gt;4)-beta-D-glucosyl-(1&lt;-&gt;1')-N-acyl-sphing-4-enine + GDP + H(+). The enzyme catalyses beta-D-galactosyl-(1-&gt;3)-N-acetyl-D-glucosamine + GDP-beta-L-fucose = beta-D-galactosyl-(1-&gt;3)-[alpha-L-fucosyl-(1-&gt;4)]-N-acetyl-D-glucosamine + GDP + H(+). It catalyses the reaction alpha-L-Fuc-(1-&gt;2)-beta-D-Gal-(1-&gt;3)-D-GlcNAc + GDP-beta-L-fucose = alpha-L-Fuc-(1-&gt;2)-beta-D-Gal-(1-&gt;3)-[alpha-L-Fuc-(1-&gt;4)]-D-GlcNAc + GDP + H(+). It carries out the reaction alpha-L-Fuc-(1-&gt;2)-beta-D-Gal-(1-&gt;4)-D-GlcNAc + GDP-beta-L-fucose = alpha-L-Fuc-(1-&gt;2)-beta-D-Gal-(1-&gt;4)-[alpha-L-Fuc-(1-&gt;3)]-D-GlcNAc + GDP + H(+). The catalysed reaction is beta-D-galactosyl-(1-&gt;4)-N-acetyl-D-glucosamine + GDP-beta-L-fucose = beta-D-galactosyl-(1-&gt;4)-[alpha-L-fucosyl-(1-&gt;3)]-N-acetyl-D-glucosamine + GDP + H(+). The enzyme catalyses lactose + GDP-beta-L-fucose = beta-D-galactosyl-(1-&gt;4)-[alpha-L-fucosyl-(1-&gt;3)]-D-glucose + GDP + H(+). It catalyses the reaction an alpha-Neu5Ac-(2-&gt;3)-beta-D-Gal-(1-&gt;3)-D-GlcNAc derivative + GDP-beta-L-fucose = an alpha-Neu5Ac-(2-&gt;3)-beta-D-Gal-(1-&gt;3)-[alpha-L-Fuc-(1-&gt;4)]-beta-D-GlcNAc derivative + GDP + H(+). Its pathway is protein modification; protein glycosylation. Functionally, catalyzes the transfer of L-fucose, from a guanosine diphosphate-beta-L-fucose, to both the subterminal N-acetyl glucosamine (GlcNAc) of type 1 chain (beta-D-Gal-(1-&gt;3)-beta-D-GlcNAc) glycolipids and oligosaccharides via an alpha(1,4) linkage, and the subterminal glucose (Glc) or GlcNAc of type 2 chain (beta-D-Gal-(1-&gt;4)-beta-D-GlcNAc) oligosaccharides via an alpha(1,3) linkage, independently of the presence of terminal alpha-L-fucosyl-(1,2) moieties on the terminal galactose of these acceptors and participates in the blood groups Lewis determination and expression of Lewis a (Le(a)), lewis b (Le(b)), Lewis x/SSEA-1 (Le(x)) and lewis y (Le(y)) antigens. Also catalyzes the transfer of L-fucose to subterminal GlcNAc of sialyl- and disialyl-lactotetraosylceramide to produce sialyl Lewis a (sLe(a)) and disialyl Lewis a via an alpha(1,4) linkage and therefore may regulate cell surface sialyl Lewis a expression and consequently regulates adhesive properties to E-selectin, cell proliferation and migration. Catalyzes the transfer of an L-fucose to 3'-sialyl-N-acetyllactosamine by an alpha(1,3) linkage, which allows the formation of sialyl-Lewis x structure and therefore may regulate the sialyl-Lewis x surface antigen expression and consequently adhesive properties to E-selectin. Prefers type 1 chain over type 2 acceptors. Type 1 tetrasaccharide is a better acceptor than type 1 disaccharide suggesting that a beta anomeric configuration of GlcNAc in the substrate is preferred. Lewis-positive (Le(+)) individuals have an active enzyme while Lewis-negative (Le(-)) individuals have an inactive enzyme. In Bos taurus (Bovine), this protein is 3-galactosyl-N-acetylglucosaminide 4-alpha-L-fucosyltransferase FUT3.